The following is a 248-amino-acid chain: 5'-nucleotidase SurE (248 aa).

Residues Asp8, Asp9, Ser39, and Asn91 each contribute to the a divalent metal cation site.

Belongs to the SurE nucleotidase family. A divalent metal cation is required as a cofactor.

It is found in the cytoplasm. The catalysed reaction is a ribonucleoside 5'-phosphate + H2O = a ribonucleoside + phosphate. Functionally, nucleotidase that shows phosphatase activity on nucleoside 5'-monophosphates. This is 5'-nucleotidase SurE from Neisseria gonorrhoeae (strain ATCC 700825 / FA 1090).